The following is a 274-amino-acid chain: Shikimate dehydrogenase (NADP(+)) (274 aa).

Shikimate is bound by residues 14 to 16 (SKS) and Thr-60. The active-site Proton acceptor is the Lys-64. An NADP(+)-binding site is contributed by Glu-76. Residues Asn-85 and Asp-101 each coordinate shikimate. NADP(+) contacts are provided by residues 126–130 (GAGGA), 150–155 (NRTARK), and Met-214. Tyr-216 is a binding site for shikimate. An NADP(+)-binding site is contributed by Gly-238.

This sequence belongs to the shikimate dehydrogenase family. Homodimer.

It carries out the reaction shikimate + NADP(+) = 3-dehydroshikimate + NADPH + H(+). Its pathway is metabolic intermediate biosynthesis; chorismate biosynthesis; chorismate from D-erythrose 4-phosphate and phosphoenolpyruvate: step 4/7. In terms of biological role, involved in the biosynthesis of the chorismate, which leads to the biosynthesis of aromatic amino acids. Catalyzes the reversible NADPH linked reduction of 3-dehydroshikimate (DHSA) to yield shikimate (SA). This is Shikimate dehydrogenase (NADP(+)) from Pseudomonas aeruginosa (strain ATCC 15692 / DSM 22644 / CIP 104116 / JCM 14847 / LMG 12228 / 1C / PRS 101 / PAO1).